The primary structure comprises 114 residues: UPF0342 protein LCA_0622 (114 aa).

It belongs to the UPF0342 family.

This is UPF0342 protein LCA_0622 from Latilactobacillus sakei subsp. sakei (strain 23K) (Lactobacillus sakei subsp. sakei).